Reading from the N-terminus, the 290-residue chain is Small ribosomal subunit protein uS2 (290 aa).

This sequence belongs to the universal ribosomal protein uS2 family. In terms of assembly, component of the small ribosomal subunit. Mature ribosomes consist of a small (40S) and a large (60S) subunit. The 40S subunit contains about 33 different proteins and 1 molecule of RNA (18S). The 60S subunit contains about 49 different proteins and 3 molecules of RNA (28S, 5.8S and 5S). Interacts with ribosomal protein S21.

The protein localises to the cytoplasm. Functionally, required for the assembly and/or stability of the 40S ribosomal subunit. Required for the processing of the 20S rRNA-precursor to mature 18S rRNA in a late step of the maturation of 40S ribosomal subunits. This Culex quinquefasciatus (Southern house mosquito) protein is Small ribosomal subunit protein uS2.